Reading from the N-terminus, the 294-residue chain is Formamidopyrimidine-DNA glycosylase (294 aa).

The active-site Schiff-base intermediate with DNA is the P2. Catalysis depends on E3, which acts as the Proton donor. The active-site Proton donor; for beta-elimination activity is K61. DNA is bound by residues H104, R123, and K169. Residues 255 to 289 form an FPG-type zinc finger; it reads AVYGRQDEPCRRCGAPIVREKFMNRSSYSCPRCQP. R279 serves as the catalytic Proton donor; for delta-elimination activity.

Belongs to the FPG family. In terms of assembly, monomer. Zn(2+) serves as cofactor.

The catalysed reaction is Hydrolysis of DNA containing ring-opened 7-methylguanine residues, releasing 2,6-diamino-4-hydroxy-5-(N-methyl)formamidopyrimidine.. The enzyme catalyses 2'-deoxyribonucleotide-(2'-deoxyribose 5'-phosphate)-2'-deoxyribonucleotide-DNA = a 3'-end 2'-deoxyribonucleotide-(2,3-dehydro-2,3-deoxyribose 5'-phosphate)-DNA + a 5'-end 5'-phospho-2'-deoxyribonucleoside-DNA + H(+). Involved in base excision repair of DNA damaged by oxidation or by mutagenic agents. Acts as a DNA glycosylase that recognizes and removes damaged bases. Has a preference for oxidized purines, such as 7,8-dihydro-8-oxoguanine (8-oxoG). Has AP (apurinic/apyrimidinic) lyase activity and introduces nicks in the DNA strand. Cleaves the DNA backbone by beta-delta elimination to generate a single-strand break at the site of the removed base with both 3'- and 5'-phosphates. The polypeptide is Formamidopyrimidine-DNA glycosylase (Nocardia farcinica (strain IFM 10152)).